We begin with the raw amino-acid sequence, 353 residues long: Photosystem II protein D1 (353 aa).

Thr2 is subject to N-acetylthreonine. Position 2 is a phosphothreonine (Thr2). The next 3 helical transmembrane spans lie at 29–46, 118–133, and 142–156; these read YIGW…TATS, HFLL…EWEL, and WIAV…AATA. His118 lines the chlorophyll a pocket. Residue Tyr126 participates in pheophytin a binding. Residues Asp170 and Glu189 each contribute to the [CaMn4O5] cluster site. The chain crosses the membrane as a helical span at residues 197–218; sequence FHMLGVAGVFGGSLFSAMHGSL. His198 lines the chlorophyll a pocket. Residues His215 and 264-265 each bind a quinone; that span reads SF. His215 provides a ligand contact to Fe cation. Fe cation is bound at residue His272. The chain crosses the membrane as a helical span at residues 274–288; that stretch reads FLAAWPVVGIWFTAL. Positions 332, 333, 342, and 344 each coordinate [CaMn4O5] cluster. Residues 345-353 constitute a propeptide that is removed on maturation; sequence AVEVPSING.

It belongs to the reaction center PufL/M/PsbA/D family. As to quaternary structure, PSII is composed of 1 copy each of membrane proteins PsbA, PsbB, PsbC, PsbD, PsbE, PsbF, PsbH, PsbI, PsbJ, PsbK, PsbL, PsbM, PsbT, PsbX, PsbY, PsbZ, Psb30/Ycf12, at least 3 peripheral proteins of the oxygen-evolving complex and a large number of cofactors. It forms dimeric complexes. The D1/D2 heterodimer binds P680, chlorophylls that are the primary electron donor of PSII, and subsequent electron acceptors. It shares a non-heme iron and each subunit binds pheophytin, quinone, additional chlorophylls, carotenoids and lipids. D1 provides most of the ligands for the Mn4-Ca-O5 cluster of the oxygen-evolving complex (OEC). There is also a Cl(-1) ion associated with D1 and D2, which is required for oxygen evolution. The PSII complex binds additional chlorophylls, carotenoids and specific lipids. serves as cofactor. Post-translationally, tyr-161 forms a radical intermediate that is referred to as redox-active TyrZ, YZ or Y-Z. C-terminally processed by CTPA; processing is essential to allow assembly of the oxygen-evolving complex and thus photosynthetic growth.

It is found in the plastid. The protein localises to the chloroplast thylakoid membrane. The enzyme catalyses 2 a plastoquinone + 4 hnu + 2 H2O = 2 a plastoquinol + O2. Photosystem II (PSII) is a light-driven water:plastoquinone oxidoreductase that uses light energy to abstract electrons from H(2)O, generating O(2) and a proton gradient subsequently used for ATP formation. It consists of a core antenna complex that captures photons, and an electron transfer chain that converts photonic excitation into a charge separation. The D1/D2 (PsbA/PsbD) reaction center heterodimer binds P680, the primary electron donor of PSII as well as several subsequent electron acceptors. The protein is Photosystem II protein D1 of Cucumis sativus (Cucumber).